The chain runs to 258 residues: Thiazole synthase (258 aa).

The Schiff-base intermediate with DXP role is filled by Lys98. Residues Gly159, 185–186, and 207–208 contribute to the 1-deoxy-D-xylulose 5-phosphate site; these read AG and NT.

It belongs to the ThiG family. In terms of assembly, homotetramer. Forms heterodimers with either ThiH or ThiS.

Its subcellular location is the cytoplasm. It catalyses the reaction [ThiS sulfur-carrier protein]-C-terminal-Gly-aminoethanethioate + 2-iminoacetate + 1-deoxy-D-xylulose 5-phosphate = [ThiS sulfur-carrier protein]-C-terminal Gly-Gly + 2-[(2R,5Z)-2-carboxy-4-methylthiazol-5(2H)-ylidene]ethyl phosphate + 2 H2O + H(+). Its pathway is cofactor biosynthesis; thiamine diphosphate biosynthesis. Catalyzes the rearrangement of 1-deoxy-D-xylulose 5-phosphate (DXP) to produce the thiazole phosphate moiety of thiamine. Sulfur is provided by the thiocarboxylate moiety of the carrier protein ThiS. In vitro, sulfur can be provided by H(2)S. This is Thiazole synthase from Bacillus thuringiensis subsp. konkukian (strain 97-27).